Reading from the N-terminus, the 486-residue chain is ATP synthase subunit beta (486 aa).

Residue 164 to 171 (GGAGVGKT) coordinates ATP.

It belongs to the ATPase alpha/beta chains family. F-type ATPases have 2 components, CF(1) - the catalytic core - and CF(0) - the membrane proton channel. CF(1) has five subunits: alpha(3), beta(3), gamma(1), delta(1), epsilon(1). CF(0) has four main subunits: a(1), b(1), b'(1) and c(9-12).

It is found in the cellular thylakoid membrane. The enzyme catalyses ATP + H2O + 4 H(+)(in) = ADP + phosphate + 5 H(+)(out). Its function is as follows. Produces ATP from ADP in the presence of a proton gradient across the membrane. The catalytic sites are hosted primarily by the beta subunits. The chain is ATP synthase subunit beta from Prochlorococcus marinus (strain MIT 9215).